We begin with the raw amino-acid sequence, 169 residues long: Der GTPase-activating protein YihI (169 aa).

Disordered stretches follow at residues Met-1–Glu-100 and Gly-144–Asn-169. Residues Ser-10–Lys-19 are compositionally biased toward basic residues. Basic and acidic residues predominate over residues Thr-20–Asp-30. The span at Arg-31–His-40 shows a compositional bias: basic residues. Residues Gly-49 to Gln-58 are compositionally biased toward polar residues. A compositionally biased stretch (acidic residues) spans Tyr-147–Gln-159. The span at Glu-160 to Asn-169 shows a compositional bias: basic and acidic residues.

It belongs to the YihI family. In terms of assembly, interacts with Der.

Its function is as follows. A GTPase-activating protein (GAP) that modifies Der/EngA GTPase function. May play a role in ribosome biogenesis. This chain is Der GTPase-activating protein YihI, found in Escherichia coli O6:H1 (strain CFT073 / ATCC 700928 / UPEC).